The sequence spans 182 residues: uncharacterized protein (182 aa).

The protein resides in the mitochondrion. This is an uncharacterized protein from Schizosaccharomyces pombe (strain 972 / ATCC 24843) (Fission yeast).